A 316-amino-acid chain; its full sequence is Thymidylate synthase (316 aa).

DUMP contacts are provided by residues Arg23 and 178 to 179 (RR). Cys198 serves as the catalytic Nucleophile. DUMP-binding positions include 218-221 (RSGD), Asn229, and 259-261 (HIY). Position 221 (Asp221) interacts with (6R)-5,10-methylene-5,6,7,8-tetrahydrofolate. Ala315 contributes to the (6R)-5,10-methylene-5,6,7,8-tetrahydrofolate binding site.

It belongs to the thymidylate synthase family. Bacterial-type ThyA subfamily. As to quaternary structure, homodimer.

The protein resides in the cytoplasm. It catalyses the reaction dUMP + (6R)-5,10-methylene-5,6,7,8-tetrahydrofolate = 7,8-dihydrofolate + dTMP. It functions in the pathway pyrimidine metabolism; dTTP biosynthesis. Its function is as follows. Catalyzes the reductive methylation of 2'-deoxyuridine-5'-monophosphate (dUMP) to 2'-deoxythymidine-5'-monophosphate (dTMP) while utilizing 5,10-methylenetetrahydrofolate (mTHF) as the methyl donor and reductant in the reaction, yielding dihydrofolate (DHF) as a by-product. This enzymatic reaction provides an intracellular de novo source of dTMP, an essential precursor for DNA biosynthesis. The sequence is that of Thymidylate synthase from Pediococcus pentosaceus (strain ATCC 25745 / CCUG 21536 / LMG 10740 / 183-1w).